The primary structure comprises 255 residues: 3-oxoacyl-[acyl-carrier-protein] reductase MabA (255 aa).

NADP(+) contacts are provided by residues 32 to 35 (NRGI), R55, 69 to 70 (DV), G98, Y161, K165, I194, and R205. Residue Y161 is the Proton acceptor of the active site.

This sequence belongs to the short-chain dehydrogenases/reductases (SDR) family. In terms of assembly, homotetramer.

The protein localises to the secreted. It is found in the cell wall. The catalysed reaction is a (3R)-hydroxyacyl-[ACP] + NADP(+) = a 3-oxoacyl-[ACP] + NADPH + H(+). It carries out the reaction a (3R)-3-hydroxyacyl-CoA + NADP(+) = a 3-oxoacyl-CoA + NADPH + H(+). The enzyme catalyses (3R)-3-hydroxybutanoyl-CoA + NADP(+) = acetoacetyl-CoA + NADPH + H(+). It catalyses the reaction (3R)-hydroxyoctanoyl-CoA + NADP(+) = 3-oxooctanoyl-CoA + NADPH + H(+). It participates in lipid metabolism; mycolic acid biosynthesis. Functionally, part of the mycobacterial fatty acid elongation system FAS-II, which is involved in mycolic acid biosynthesis. Catalyzes the NADPH-dependent reduction of beta-ketoacyl derivatives, the second step of the FAS-II elongation cycle. Has a preference for longer substrates. Can use CoA derivatives as substrates in vitro. In Mycolicibacterium smegmatis (strain ATCC 700084 / mc(2)155) (Mycobacterium smegmatis), this protein is 3-oxoacyl-[acyl-carrier-protein] reductase MabA.